Reading from the N-terminus, the 230-residue chain is A-type ATP synthase subunit D (230 aa).

The segment at 204–230 (AKKEEEEDALAAEEEAEEEPEAVTADD) is disordered. Over residues 208 to 230 (EEEDALAAEEEAEEEPEAVTADD) the composition is skewed to acidic residues.

The protein belongs to the V-ATPase D subunit family. In terms of assembly, has multiple subunits with at least A(3), B(3), C, D, E, F, H, I and proteolipid K(x).

The protein resides in the cell membrane. Functionally, component of the A-type ATP synthase that produces ATP from ADP in the presence of a proton gradient across the membrane. The polypeptide is A-type ATP synthase subunit D (Haloarcula marismortui (strain ATCC 43049 / DSM 3752 / JCM 8966 / VKM B-1809) (Halobacterium marismortui)).